The sequence spans 204 residues: Tumor necrosis factor alpha-induced protein 8-like protein 3 (204 aa).

The segment covering 1 to 10 (MDSDSGEQSE) has biased composition (acidic residues). The tract at residues 1-20 (MDSDSGEQSEGEPGTAAGPH) is disordered. The binding to phosphoinositides stretch occupies residues 21–204 (VFSSKNLALQ…INKLLDDKIL (184 aa)).

It belongs to the TNFAIP8 family. In terms of tissue distribution, widely expressed (at protein level).

It is found in the cytoplasm. Its subcellular location is the cell membrane. Functionally, acts as a lipid transfer protein. Preferentially captures and shuttles two lipid second messengers, i.e., phosphatidylinositol 4,5- bisphosphate and phosphatidylinositol 3,4,5-trisphosphate and increases their levels in the plasma membrane. Additionally, may also function as a lipid-presenting protein to enhance the activity of the PI3K-AKT and MEK-ERK pathways. May act as a regulator of tumorigenesis through its activation of phospholipid signaling. This is Tumor necrosis factor alpha-induced protein 8-like protein 3 (Tnfaip8l3) from Mus musculus (Mouse).